A 248-amino-acid polypeptide reads, in one-letter code: Probable transcriptional regulatory protein FTW_1073 (248 aa).

The protein belongs to the TACO1 family.

The protein resides in the cytoplasm. This is Probable transcriptional regulatory protein FTW_1073 from Francisella tularensis subsp. tularensis (strain WY96-3418).